The primary structure comprises 160 residues: Phosphopantetheine adenylyltransferase (160 aa).

A substrate-binding site is contributed by Thr-9. Residues 9–10 and His-17 each bind ATP; that span reads TF. Residues Lys-41, Leu-73, and Arg-87 each contribute to the substrate site. ATP is bound by residues 88–90, Glu-98, and 123–129; these read GLR and YSFLSSS.

This sequence belongs to the bacterial CoaD family. Homohexamer. It depends on Mg(2+) as a cofactor.

It localises to the cytoplasm. The catalysed reaction is (R)-4'-phosphopantetheine + ATP + H(+) = 3'-dephospho-CoA + diphosphate. Its pathway is cofactor biosynthesis; coenzyme A biosynthesis; CoA from (R)-pantothenate: step 4/5. Reversibly transfers an adenylyl group from ATP to 4'-phosphopantetheine, yielding dephospho-CoA (dPCoA) and pyrophosphate. The polypeptide is Phosphopantetheine adenylyltransferase (Moorella thermoacetica (strain ATCC 39073 / JCM 9320)).